Here is a 148-residue protein sequence, read N- to C-terminus: Small ribosomal subunit protein eS19 (148 aa).

Belongs to the eukaryotic ribosomal protein eS19 family. As to quaternary structure, part of the 30S ribosomal subunit.

May be involved in maturation of the 30S ribosomal subunit. This is Small ribosomal subunit protein eS19 from Methanocaldococcus jannaschii (strain ATCC 43067 / DSM 2661 / JAL-1 / JCM 10045 / NBRC 100440) (Methanococcus jannaschii).